Reading from the N-terminus, the 128-residue chain is 3-aminoacrylate deaminase RutC (128 aa).

It belongs to the RutC family. In terms of assembly, homotrimer.

The enzyme catalyses (Z)-3-aminoacrylate + H2O + H(+) = 3-oxopropanoate + NH4(+). Functionally, involved in pyrimidine catabolism. Catalyzes the deamination of 3-aminoacrylate to malonic semialdehyde, a reaction that can also occur spontaneously. RutC may facilitate the reaction and modulate the metabolic fitness, rather than catalyzing essential functions. The protein is 3-aminoacrylate deaminase RutC of Escherichia coli O157:H7.